The following is a 464-amino-acid chain: Glutamate--tRNA ligase (464 aa).

The short motif at 10-20 is the 'HIGH' region element; the sequence is PSPTGHLHLGG. 4 residues coordinate Zn(2+): C99, C101, C126, and E128. The short motif at 236–240 is the 'KMSKS' region element; it reads KLSKR. K239 contacts ATP.

This sequence belongs to the class-I aminoacyl-tRNA synthetase family. Glutamate--tRNA ligase type 1 subfamily. Monomer. The cofactor is Zn(2+).

Its subcellular location is the cytoplasm. The enzyme catalyses tRNA(Glu) + L-glutamate + ATP = L-glutamyl-tRNA(Glu) + AMP + diphosphate. Catalyzes the attachment of glutamate to tRNA(Glu) in a two-step reaction: glutamate is first activated by ATP to form Glu-AMP and then transferred to the acceptor end of tRNA(Glu). The sequence is that of Glutamate--tRNA ligase from Oleidesulfovibrio alaskensis (strain ATCC BAA-1058 / DSM 17464 / G20) (Desulfovibrio alaskensis).